Here is a 151-residue protein sequence, read N- to C-terminus: Transcriptional regulator SyrB (151 aa).

The disordered stretch occupies residues 1-61 (MADESNTGPV…RYSEQERNDK (61 aa)). Positions 33-48 (PQKAAAEPAQPKAPAA) are enriched in low complexity. Residues 52–61 (RYSEQERNDK) show a composition bias toward basic and acidic residues.

It belongs to the SyrB family.

Functionally, responsible for the repression of SyrM activity. The sequence is that of Transcriptional regulator SyrB (syrB) from Rhizobium meliloti (strain 1021) (Ensifer meliloti).